The following is a 594-amino-acid chain: DNA polymerase II small subunit (594 aa).

This sequence belongs to the DNA polymerase delta/II small subunit family. As to quaternary structure, heterodimer of a large subunit and a small subunit.

It catalyses the reaction DNA(n) + a 2'-deoxyribonucleoside 5'-triphosphate = DNA(n+1) + diphosphate. The catalysed reaction is Exonucleolytic cleavage in the 3'- to 5'-direction to yield nucleoside 5'-phosphates.. In terms of biological role, possesses two activities: a DNA synthesis (polymerase) and an exonucleolytic activity that degrades single-stranded DNA in the 3' to 5' direction. Has a template-primer preference which is characteristic of a replicative DNA polymerase. The polypeptide is DNA polymerase II small subunit (polB) (Methanocaldococcus jannaschii (strain ATCC 43067 / DSM 2661 / JAL-1 / JCM 10045 / NBRC 100440) (Methanococcus jannaschii)).